The following is a 356-amino-acid chain: MSQDQDALTTEVLQRLRRKEGTWQDWGAGCRQLQKQGLSPQAIFEATGIEPIHQNQLITALQVSQSLGEAPESVRAYFQTRGSDLLYELRVLSAGDRLAAATLIVEKQLDVTAVHEVCRALKAVSYRKDNSEGFGESVGDRIGRYYWQLARQQRDLAQRSRLIAQGLRFVESASGRQALEKLLTDFTVVPAVNQPRLPLYRLDTAEEVPYLVPVAGTAPLTATVLQQVPRLSCTEVFRVVAVPQGMSLVALPAWQVLLNAVDPVAILWPAADLPAELPPSPEGLPIAQVLLVVDRGLAEWDRDRYLLIAPSPSEAVQLAWLPEPPTATVVGQLLLVLRPPQVLDESLNRELWFFEE.

An N-terminal alpha-helix region spans residues 7 to 185; it reads ALTTEVLQRL…RQALEKLLTD (179 aa). Residues 209-342 form a C-terminal beta-sheet region; the sequence is PYLVPVAGTA…LLLVLRPPQV (134 aa).

Belongs to the RAF family. Homodimer. Forms an RbcL(8)-Raf1(8) complex. Forms complexes of many stoichiometries with RbcL with and without RbcS. RbcX and Raf1 can bind simultaneously to RbcL.

It localises to the cytoplasm. Functionally, a major RuBisCO chaperone. Acts after GroEL-GroES chaperonin to fold and/or assemble the large subunit of RuBisCO (ccbL, rbcL). Cooperates with RbcX in RbcL folding, plays the major role in assembly of dimers into RbcL(8)-Raf1(8) intermediate complexes. RbcS replaces Raf1, leading to holoenzyme formation. In terms of biological role, required for optimal reconstitution of RuBisCO upon expression of rbcL-rbcS subunits in E.coli. Only interacts with the large subunit (cbbL, rbcL). Probably acts in the final stages of RuBisCO assembly, possibly participating in the addition of the small subunit (ccbS, rbcS). The chain is RuBisCO accumulation factor 1 from Thermosynechococcus vestitus (strain NIES-2133 / IAM M-273 / BP-1).